A 149-amino-acid polypeptide reads, in one-letter code: uncharacterized protein (149 aa).

The interval H34–S94 is disordered. Residues Q56–R66 show a composition bias toward basic and acidic residues.

The protein resides in the mitochondrion. This is an uncharacterized protein from Arabidopsis thaliana (Mouse-ear cress).